A 670-amino-acid polypeptide reads, in one-letter code: uncharacterized protein (670 aa).

10 helical membrane passes run 23–42, 47–69, 76–98, 118–140, 153–170, 381–403, 410–432, 437–454, 461–483, and 493–510; these read YALR…YYLN, YWAM…SKSL, LLGA…FFLL, VAYA…VNIT, VCEV…MMIL, QWDA…SAVA, SLLM…GLMV, LWQF…MQLL, FAAL…NPPV, and NLAK…FAIL.

This sequence belongs to the aromatic acid exporter ArAE (TC 2.A.85) family.

The protein localises to the cell membrane. This is an uncharacterized protein from Escherichia coli O157:H7.